Reading from the N-terminus, the 197-residue chain is MRIGVLALQGDIEEHEQAIRDSSRSLGFKVDVVRVKRPGDLKGLSGILIPGGESTTIWKLSQGELMLALRDEILNGLPAMGTCAGAIFMAKEVKDRVVGETGQGILGLMDMTVIRNYYGRQRESFEMDLNLEGIGSVRAVFIRAPAIVRIWGKANALSELNGTYPAVIQDNMLALTFHPELTTSKVHEWFLRELVLK.

52–54 lines the L-glutamine pocket; the sequence is GES. The active-site Nucleophile is cysteine 83. L-glutamine contacts are provided by residues arginine 115 and 142–143; that span reads IR. Active-site charge relay system residues include histidine 178 and glutamate 180.

Belongs to the glutaminase PdxT/SNO family. In the presence of PdxS, forms a dodecamer of heterodimers. Only shows activity in the heterodimer.

The catalysed reaction is aldehydo-D-ribose 5-phosphate + D-glyceraldehyde 3-phosphate + L-glutamine = pyridoxal 5'-phosphate + L-glutamate + phosphate + 3 H2O + H(+). It carries out the reaction L-glutamine + H2O = L-glutamate + NH4(+). It functions in the pathway cofactor biosynthesis; pyridoxal 5'-phosphate biosynthesis. Catalyzes the hydrolysis of glutamine to glutamate and ammonia as part of the biosynthesis of pyridoxal 5'-phosphate. The resulting ammonia molecule is channeled to the active site of PdxS. The chain is Pyridoxal 5'-phosphate synthase subunit PdxT from Korarchaeum cryptofilum (strain OPF8).